A 68-amino-acid polypeptide reads, in one-letter code: UPF0434 protein BMA10229_A1047 (68 aa).

Belongs to the UPF0434 family.

The protein is UPF0434 protein BMA10229_A1047 of Burkholderia mallei (strain NCTC 10229).